The chain runs to 171 residues: NADH-quinone oxidoreductase subunit I 2 (171 aa).

2 consecutive 4Fe-4S ferredoxin-type domains span residues 39–71 and 81–110; these read IVLTRDPDGQERCVACNLCAVACPVGCIDLSKA and EHFRINFARCIFCGYCEEACPTAAIQLTPD. 8 residues coordinate [4Fe-4S] cluster: Cys51, Cys54, Cys57, Cys61, Cys90, Cys93, Cys96, and Cys100.

Belongs to the complex I 23 kDa subunit family. NDH-1 is composed of 14 different subunits. Subunits NuoA, H, J, K, L, M, N constitute the membrane sector of the complex. [4Fe-4S] cluster is required as a cofactor.

Its subcellular location is the cell inner membrane. It catalyses the reaction a quinone + NADH + 5 H(+)(in) = a quinol + NAD(+) + 4 H(+)(out). Functionally, NDH-1 shuttles electrons from NADH, via FMN and iron-sulfur (Fe-S) centers, to quinones in the respiratory chain. The immediate electron acceptor for the enzyme in this species is believed to be ubiquinone. Couples the redox reaction to proton translocation (for every two electrons transferred, four hydrogen ions are translocated across the cytoplasmic membrane), and thus conserves the redox energy in a proton gradient. The chain is NADH-quinone oxidoreductase subunit I 2 from Rhodopseudomonas palustris (strain BisB18).